Here is a 232-residue protein sequence, read N- to C-terminus: Protein INAPERTURATE POLLEN 1 homolog (232 aa).

In terms of assembly, interacts with LECRKS7/DAF1.

It localises to the cytoplasm. In terms of biological role, required for pollen aperture formation, male fertility and LECRKS7/DAF1 function. Seems to be involved in operculum protrusion. Participates in the modification of plasma membrane at future aperture sites, possibly by creating close contact between the plasma membrane and callose wall to prevent primexine formation and sporopollenin deposition. This is Protein INAPERTURATE POLLEN 1 homolog from Oryza sativa subsp. japonica (Rice).